We begin with the raw amino-acid sequence, 404 residues long: 5-aminolevulinate synthase (404 aa).

Residues R21 and S136 each coordinate substrate. 3 residues coordinate pyridoxal 5'-phosphate: S188, H216, and T244. Residue K247 is part of the active site. K247 is subject to N6-(pyridoxal phosphate)lysine. Pyridoxal 5'-phosphate is bound by residues T276 and T277. T362 is a binding site for substrate.

Belongs to the class-II pyridoxal-phosphate-dependent aminotransferase family. In terms of assembly, homodimer. Pyridoxal 5'-phosphate serves as cofactor.

The enzyme catalyses succinyl-CoA + glycine + H(+) = 5-aminolevulinate + CO2 + CoA. It functions in the pathway porphyrin-containing compound metabolism; protoporphyrin-IX biosynthesis; 5-aminolevulinate from glycine: step 1/1. This chain is 5-aminolevulinate synthase (hemA), found in Rhizobium meliloti (strain 1021) (Ensifer meliloti).